Here is a 118-residue protein sequence, read N- to C-terminus: Large ribosomal subunit protein bL20 (118 aa).

This sequence belongs to the bacterial ribosomal protein bL20 family.

In terms of biological role, binds directly to 23S ribosomal RNA and is necessary for the in vitro assembly process of the 50S ribosomal subunit. It is not involved in the protein synthesizing functions of that subunit. In Trichormus variabilis (strain ATCC 29413 / PCC 7937) (Anabaena variabilis), this protein is Large ribosomal subunit protein bL20.